We begin with the raw amino-acid sequence, 368 residues long: Homoserine O-acetyltransferase (368 aa).

Residues 47–349 (NAILICHALS…SGEGHDSFLL (303 aa)) form the AB hydrolase-1 domain. Ser153 (nucleophile) is an active-site residue. Residue Arg221 coordinates substrate. Catalysis depends on residues Asp311 and His344. Substrate is bound at residue Asp345.

The protein belongs to the AB hydrolase superfamily. MetX family. In terms of assembly, homodimer.

The protein localises to the cytoplasm. The enzyme catalyses L-homoserine + acetyl-CoA = O-acetyl-L-homoserine + CoA. Its pathway is amino-acid biosynthesis; L-methionine biosynthesis via de novo pathway; O-acetyl-L-homoserine from L-homoserine: step 1/1. Its function is as follows. Transfers an acetyl group from acetyl-CoA to L-homoserine, forming acetyl-L-homoserine. This chain is Homoserine O-acetyltransferase, found in Leptospira borgpetersenii serovar Hardjo-bovis (strain JB197).